The chain runs to 766 residues: Phosphoribosylformylglycinamidine synthase subunit PurL (766 aa).

Residue His-66 is part of the active site. Residues Tyr-69 and Lys-113 each coordinate ATP. Glu-115 is a Mg(2+) binding site. Substrate is bound by residues 116–119 (SHNH) and Arg-138. His-117 (proton acceptor) is an active-site residue. Asp-139 lines the Mg(2+) pocket. Substrate is bound at residue Gln-264. Asp-292 provides a ligand contact to Mg(2+). Residue 336–338 (ESQ) coordinates substrate. Residues Asn-524 and Gly-561 each contribute to the ATP site. Asn-562 contributes to the Mg(2+) binding site. Ser-564 is a binding site for substrate.

This sequence belongs to the FGAMS family. Monomer. Part of the FGAM synthase complex composed of 1 PurL, 1 PurQ and 2 PurS subunits.

Its subcellular location is the cytoplasm. The enzyme catalyses N(2)-formyl-N(1)-(5-phospho-beta-D-ribosyl)glycinamide + L-glutamine + ATP + H2O = 2-formamido-N(1)-(5-O-phospho-beta-D-ribosyl)acetamidine + L-glutamate + ADP + phosphate + H(+). It participates in purine metabolism; IMP biosynthesis via de novo pathway; 5-amino-1-(5-phospho-D-ribosyl)imidazole from N(2)-formyl-N(1)-(5-phospho-D-ribosyl)glycinamide: step 1/2. Part of the phosphoribosylformylglycinamidine synthase complex involved in the purines biosynthetic pathway. Catalyzes the ATP-dependent conversion of formylglycinamide ribonucleotide (FGAR) and glutamine to yield formylglycinamidine ribonucleotide (FGAM) and glutamate. The FGAM synthase complex is composed of three subunits. PurQ produces an ammonia molecule by converting glutamine to glutamate. PurL transfers the ammonia molecule to FGAR to form FGAM in an ATP-dependent manner. PurS interacts with PurQ and PurL and is thought to assist in the transfer of the ammonia molecule from PurQ to PurL. In Mycobacterium tuberculosis (strain CDC 1551 / Oshkosh), this protein is Phosphoribosylformylglycinamidine synthase subunit PurL.